The following is a 67-amino-acid chain: Conotoxin Cl14.2b (67 aa).

An N-terminal signal peptide occupies residues M1 to G20. The propeptide occupies F21–Q48.

Belongs to the conotoxin L superfamily. Post-translationally, contains 2 disulfide bonds. In terms of tissue distribution, expressed by the venom duct.

The protein localises to the secreted. Functionally, increases calcium current amplitude through Cav1.2/Cav1.3 channels in rat pancreatic beta-cells, which is a prerequisite for eliciting insulin secretion. Stimulates insulin secretion in NIT-1 insulinoma cell lines. In vivo, significantly decreases mice blood glucose levels as of 45 minutes after treatment, similarly to insulin treatment. Has a potential therapeutic use in endocrinal pathologies such as early stages of type 2 diabetes where the pancreas's capability to produce insulin is still effective. The sequence is that of Conotoxin Cl14.2b from Californiconus californicus (California cone).